The primary structure comprises 722 residues: Protein Aster-A (722 aa).

The tract at residues 1-62 (MFDTTPHSGR…KSGVSGTLST (62 aa)) is disordered. Residues 8-18 (SGRSSPSSSPS) are compositionally biased toward low complexity. Residues 93–160 (EDFRKLFSKL…KEVTCLKKEK (68 aa)) form the GRAM domain. Residues 256 to 336 (ISPSGAADHS…DGPTSSLGPL (81 aa)) form a disordered region. Phosphoserine occurs at positions 265, 269, 273, and 417. One can recognise a VASt domain in the interval 369–540 (SGRLLINSVF…ELAKAEKLSL (172 aa)). The segment at 561 to 600 (LSWRGHRDGPQHPDPDPCTQTSMHTSGSLSSRFSEPSVDQ) is disordered. Over residues 565–575 (GHRDGPQHPDP) the composition is skewed to basic and acidic residues. The span at 578 to 594 (CTQTSMHTSGSLSSRFS) shows a compositional bias: polar residues. A helical transmembrane segment spans residues 609–629 (ALVLISIVLIVLIALNALLFY).

In terms of tissue distribution, highly expressed in the brain.

It localises to the endoplasmic reticulum membrane. The protein resides in the cell membrane. Its subcellular location is the cytoplasmic vesicle. It is found in the autophagosome. Its function is as follows. Cholesterol transporter that mediates non-vesicular transport of cholesterol from the plasma membrane (PM) to the endoplasmic reticulum (ER). Contains unique domains for binding cholesterol and the PM, thereby serving as a molecular bridge for the transfer of cholesterol from the PM to the ER. Plays a crucial role in cholesterol homeostasis and has the unique ability to localize to the PM based on the level of membrane cholesterol. In lipid-poor conditions localizes to the ER membrane and in response to excess cholesterol in the PM is recruited to the endoplasmic reticulum-plasma membrane contact sites (EPCS) which is mediated by the GRAM domain. At the EPCS, the sterol-binding VASt/ASTER domain binds to the cholesterol in the PM and facilitates its transfer from the PM to ER. May play a role in tumor progression. Plays a role in autophagy regulation and is required for biogenesis of the autophagosome. This function in autophagy requires its cholesterol-transfer activity. The chain is Protein Aster-A from Mus musculus (Mouse).